The sequence spans 205 residues: Proteasome subunit beta type-3 (205 aa).

An N-acetylserine modification is found at Ser2. Residue Lys77 is modified to N6-acetyllysine.

This sequence belongs to the peptidase T1B family. As to quaternary structure, the 26S proteasome consists of a 20S proteasome core and two 19S regulatory subunits. The 20S proteasome core is a barrel-shaped complex made of 28 subunits that are arranged in four stacked rings. The two outer rings are each formed by seven alpha subunits, and the two inner rings are formed by seven beta subunits. The proteolytic activity is exerted by three beta-subunits PSMB5, PSMB6 and PSMB7.

The protein localises to the cytoplasm. It is found in the nucleus. Functionally, non-catalytic component of the 20S core proteasome complex involved in the proteolytic degradation of most intracellular proteins. This complex plays numerous essential roles within the cell by associating with different regulatory particles. Associated with two 19S regulatory particles, forms the 26S proteasome and thus participates in the ATP-dependent degradation of ubiquitinated proteins. The 26S proteasome plays a key role in the maintenance of protein homeostasis by removing misfolded or damaged proteins that could impair cellular functions, and by removing proteins whose functions are no longer required. Associated with the PA200 or PA28, the 20S proteasome mediates ubiquitin-independent protein degradation. This type of proteolysis is required in several pathways including spermatogenesis (20S-PA200 complex) or generation of a subset of MHC class I-presented antigenic peptides (20S-PA28 complex). The polypeptide is Proteasome subunit beta type-3 (Psmb3) (Rattus norvegicus (Rat)).